Consider the following 289-residue polypeptide: MDKVKIALQYMLPKHLLSRLVGKLAAAEAGTLTTAAIKWFIKQYKIDMSEAAQSEPQAYKSFNDFFTRALKPGIRPINQHTHIMVHPVDGAVSQLGPIKEGRIFQAKGHHYSSLTLLGDQAQDAKRFEGGDFATIYLAPKDYHRIHMPIKGTLSKMTYVPGELFSVNPLTARHVPGLFARNERVVAIFETEHGPLAMVLVGATIVASIETVWAGTITPPTGKQVFTWEYPTVGPDAITLDKGDEMGRFKLGSTVVMLFAKDAIDTFAEGVEAEAVTRMGQAFANLNNPK.

Active-site charge relay system; for autoendoproteolytic cleavage activity residues include Asp89, His146, and Ser252. The active-site Schiff-base intermediate with substrate; via pyruvic acid; for decarboxylase activity is the Ser252. Ser252 carries the post-translational modification Pyruvic acid (Ser); by autocatalysis.

Belongs to the phosphatidylserine decarboxylase family. PSD-B subfamily. Prokaryotic type I sub-subfamily. Heterodimer of a large membrane-associated beta subunit and a small pyruvoyl-containing alpha subunit. It depends on pyruvate as a cofactor. In terms of processing, is synthesized initially as an inactive proenzyme. Formation of the active enzyme involves a self-maturation process in which the active site pyruvoyl group is generated from an internal serine residue via an autocatalytic post-translational modification. Two non-identical subunits are generated from the proenzyme in this reaction, and the pyruvate is formed at the N-terminus of the alpha chain, which is derived from the carboxyl end of the proenzyme. The autoendoproteolytic cleavage occurs by a canonical serine protease mechanism, in which the side chain hydroxyl group of the serine supplies its oxygen atom to form the C-terminus of the beta chain, while the remainder of the serine residue undergoes an oxidative deamination to produce ammonia and the pyruvoyl prosthetic group on the alpha chain. During this reaction, the Ser that is part of the protease active site of the proenzyme becomes the pyruvoyl prosthetic group, which constitutes an essential element of the active site of the mature decarboxylase.

Its subcellular location is the cell membrane. The catalysed reaction is a 1,2-diacyl-sn-glycero-3-phospho-L-serine + H(+) = a 1,2-diacyl-sn-glycero-3-phosphoethanolamine + CO2. The protein operates within phospholipid metabolism; phosphatidylethanolamine biosynthesis; phosphatidylethanolamine from CDP-diacylglycerol: step 2/2. Functionally, catalyzes the formation of phosphatidylethanolamine (PtdEtn) from phosphatidylserine (PtdSer). In Shewanella sp. (strain W3-18-1), this protein is Phosphatidylserine decarboxylase proenzyme.